Here is a 637-residue protein sequence, read N- to C-terminus: tRNA 5-methylaminomethyl-2-thiouridine biosynthesis bifunctional protein MnmC (637 aa).

Residues 1–231 (MPIDPARLAF…KRQMCRGRHR (231 aa)) are tRNA (mnm(5)s(2)U34)-methyltransferase. Residues 250–637 (IGAGLAGSST…RPARGMTREG (388 aa)) form an FAD-dependent cmnm(5)s(2)U34 oxidoreductase region.

This sequence in the N-terminal section; belongs to the methyltransferase superfamily. tRNA (mnm(5)s(2)U34)-methyltransferase family. In the C-terminal section; belongs to the DAO family. FAD serves as cofactor.

The protein resides in the cytoplasm. It catalyses the reaction 5-aminomethyl-2-thiouridine(34) in tRNA + S-adenosyl-L-methionine = 5-methylaminomethyl-2-thiouridine(34) in tRNA + S-adenosyl-L-homocysteine + H(+). Catalyzes the last two steps in the biosynthesis of 5-methylaminomethyl-2-thiouridine (mnm(5)s(2)U) at the wobble position (U34) in tRNA. Catalyzes the FAD-dependent demodification of cmnm(5)s(2)U34 to nm(5)s(2)U34, followed by the transfer of a methyl group from S-adenosyl-L-methionine to nm(5)s(2)U34, to form mnm(5)s(2)U34. The polypeptide is tRNA 5-methylaminomethyl-2-thiouridine biosynthesis bifunctional protein MnmC (Aromatoleum aromaticum (strain DSM 19018 / LMG 30748 / EbN1) (Azoarcus sp. (strain EbN1))).